The following is a 251-amino-acid chain: ATP synthase subunit a (251 aa).

7 helical membrane-spanning segments follow: residues 29–49 (FTQS…ITLV), 56–73 (LVPG…EFIA), 87–107 (FVPL…FGMI), 117–137 (IIVT…YGFM), 159–181 (LIVA…RLFA), 192–212 (IFAG…LSPL), and 218–238 (VAIT…FATL).

This sequence belongs to the ATPase A chain family. In terms of assembly, F-type ATPases have 2 components, CF(1) - the catalytic core - and CF(0) - the membrane proton channel. CF(1) has five subunits: alpha(3), beta(3), gamma(1), delta(1), epsilon(1). CF(0) has three main subunits: a(1), b(2) and c(9-12). The alpha and beta chains form an alternating ring which encloses part of the gamma chain. CF(1) is attached to CF(0) by a central stalk formed by the gamma and epsilon chains, while a peripheral stalk is formed by the delta and b chains.

Its subcellular location is the cell inner membrane. In terms of biological role, key component of the proton channel; it plays a direct role in the translocation of protons across the membrane. The chain is ATP synthase subunit a from Methylobacterium sp. (strain 4-46).